A 50-amino-acid polypeptide reads, in one-letter code: Mast cell degranulating peptide (50 aa).

Positions 1–27 (MISMLRCTFFFLSVILITSYFVTPTMS) are cleaved as a signal peptide. An N6-formyllysine; partial modification is found at Lys29. 2 disulfides stabilise this stretch: Cys30-Cys42 and Cys32-Cys46. 2 positions are modified to N6-formyllysine; partial: Lys44 and Lys48. Asn49 carries the asparagine amide modification.

Expressed by the venom gland.

The protein localises to the secreted. Its function is as follows. Potent anti-inflammatory agent. At low concentrations, mediates the degranulation of mast cells thus evoking an inflammatory response. Also acts as a neurotoxin capable of blocking a class of voltage-gated potassium channels. In Apis mellifera (Honeybee), this protein is Mast cell degranulating peptide.